Consider the following 882-residue polypeptide: HTH-type transcriptional regulator AlkS (882 aa).

51–58 (APPGYGKT) provides a ligand contact to ATP. The HTH luxR-type domain maps to 815-880 (ENKADALLTR…QATIEAERQG (66 aa)). The segment at residues 839–858 (NKQIATNMHVTEDAIKWHMR) is a DNA-binding region (H-T-H motif).

Its pathway is hydrocarbon metabolism; alkane degradation. Its function is as follows. This protein activates the expression of alkBFGHJKL operon in the presence of alkanes. This is HTH-type transcriptional regulator AlkS (alkS) from Ectopseudomonas oleovorans (Pseudomonas oleovorans).